The sequence spans 280 residues: Shikimate dehydrogenase (NADP(+)) (280 aa).

Shikimate is bound by residues 15-17 and threonine 62; that span reads SLS. The Proton acceptor role is filled by lysine 66. The shikimate site is built by asparagine 88 and aspartate 104. Residues 128–132, 151–156, and isoleucine 222 contribute to the NADP(+) site; these read GAGGA and NRTEER. Residue tyrosine 224 participates in shikimate binding. An NADP(+)-binding site is contributed by glycine 245.

This sequence belongs to the shikimate dehydrogenase family. As to quaternary structure, homodimer.

The enzyme catalyses shikimate + NADP(+) = 3-dehydroshikimate + NADPH + H(+). Its pathway is metabolic intermediate biosynthesis; chorismate biosynthesis; chorismate from D-erythrose 4-phosphate and phosphoenolpyruvate: step 4/7. Its function is as follows. Involved in the biosynthesis of the chorismate, which leads to the biosynthesis of aromatic amino acids. Catalyzes the reversible NADPH linked reduction of 3-dehydroshikimate (DHSA) to yield shikimate (SA). This Methanosarcina mazei (strain ATCC BAA-159 / DSM 3647 / Goe1 / Go1 / JCM 11833 / OCM 88) (Methanosarcina frisia) protein is Shikimate dehydrogenase (NADP(+)).